Consider the following 34-residue polypeptide: ALVTQSNAPSWGLGRISNRQAGIRDYHYLSGTSM.

The active-site Charge relay system is Ser-33.

This sequence belongs to the peptidase S8 family.

It is found in the secreted. The catalysed reaction is Rather non-specific hydrolysis of proteins. Preferential cleavage: -Ala-|-Xaa-, -Tyr-|-Xaa-, -Phe-|-Xaa- in small molecular substrates.. Its function is as follows. This is an extracellular proteinase with a general specificity for apolar residues. The sequence is that of Thermomycolin from Malbranchea cinnamomea (Thermophilic fungus).